We begin with the raw amino-acid sequence, 233 residues long: Large ribosomal subunit protein uL1 (233 aa).

It belongs to the universal ribosomal protein uL1 family. In terms of assembly, part of the 50S ribosomal subunit.

In terms of biological role, binds directly to 23S rRNA. The L1 stalk is quite mobile in the ribosome, and is involved in E site tRNA release. Protein L1 is also a translational repressor protein, it controls the translation of the L11 operon by binding to its mRNA. The sequence is that of Large ribosomal subunit protein uL1 from Geotalea daltonii (strain DSM 22248 / JCM 15807 / FRC-32) (Geobacter daltonii).